We begin with the raw amino-acid sequence, 78 residues long: Major outer membrane lipoprotein Lpp (78 aa).

The first 20 residues, 1–20 (MNRTKLVLGAVILASTMLAG), serve as a signal peptide directing secretion. Residue cysteine 21 is the site of N-palmitoyl cysteine attachment. The S-diacylglycerol cysteine moiety is linked to residue cysteine 21. 2 repeats span residues 24-34 (NAKIDQLSSDV) and 38-48 (NAKVDQLSNDV). Residues 27–75 (IDQLSSDVQTLNAKVDQLSNDVNAVRADVQAAKDDAARANQRLDNQAQA) adopt a coiled-coil conformation. Lysine 78 is subject to N6-murein peptidoglycan lysine.

This sequence belongs to the Lpp family. Homotrimer.

Its subcellular location is the cell outer membrane. It localises to the secreted. The protein resides in the cell wall. A highly abundant outer membrane lipoprotein that controls the distance between the inner and outer membranes. The only protein known to be covalently linked to the peptidoglycan network (PGN). Also non-covalently binds the PGN. The link between the cell outer membrane and PGN contributes to maintenance of the structural and functional integrity of the cell envelope, and maintains the correct distance between the PGN and the outer membrane. The sequence is that of Major outer membrane lipoprotein Lpp from Yersinia pestis.